The following is a 46-amino-acid chain: uncharacterized protein (46 aa).

A helical membrane pass occupies residues 20–42 (MAMIWVVAALVIALVVGTALNYI).

The protein resides in the membrane. This is an uncharacterized protein from Bacillus subtilis (strain 168).